Consider the following 315-residue polypeptide: uncharacterized protein (315 aa).

Basic residues predominate over residues 296 to 308 (RSKLRKGTHKRTP). A disordered region spans residues 296–315 (RSKLRKGTHKRTPGRAGDAD).

Belongs to the metallo-dependent hydrolases superfamily. Peptidase M19 family.

This is an uncharacterized protein from Acinetobacter calcoaceticus.